The sequence spans 198 residues: Segregation and condensation protein B (198 aa).

The protein belongs to the ScpB family. Homodimer. Homodimerization may be required to stabilize the binding of ScpA to the Smc head domains. Component of a cohesin-like complex composed of ScpA, ScpB and the Smc homodimer, in which ScpA and ScpB bind to the head domain of Smc. The presence of the three proteins is required for the association of the complex with DNA.

It localises to the cytoplasm. In terms of biological role, participates in chromosomal partition during cell division. May act via the formation of a condensin-like complex containing Smc and ScpA that pull DNA away from mid-cell into both cell halves. This chain is Segregation and condensation protein B, found in Streptococcus mutans serotype c (strain ATCC 700610 / UA159).